We begin with the raw amino-acid sequence, 409 residues long: 2,3-bisphosphoglycerate-independent phosphoglycerate mutase 1 (409 aa).

Basic and acidic residues predominate over residues 163-173 (SDADPKVEGKP). The interval 163–184 (SDADPKVEGKPPKKIKALDGSP) is disordered.

This sequence belongs to the BPG-independent phosphoglycerate mutase family. A-PGAM subfamily.

It carries out the reaction (2R)-2-phosphoglycerate = (2R)-3-phosphoglycerate. Its pathway is carbohydrate degradation; glycolysis; pyruvate from D-glyceraldehyde 3-phosphate: step 3/5. Functionally, catalyzes the interconversion of 2-phosphoglycerate and 3-phosphoglycerate. The chain is 2,3-bisphosphoglycerate-independent phosphoglycerate mutase 1 (apgM1) from Methanothermobacter thermautotrophicus (strain ATCC 29096 / DSM 1053 / JCM 10044 / NBRC 100330 / Delta H) (Methanobacterium thermoautotrophicum).